A 156-amino-acid polypeptide reads, in one-letter code: Endogenous retrovirus group K member 24 Pro protein (156 aa).

Residues 21-96 (FEGLVDTGAD…IPLNLWGRDL (76 aa)) enclose the Peptidase A2 domain. Residue Asp-26 is part of the active site. A G-patch domain is found at 111–156 (YSPTSQKIMTKMGYIPGKGLGKNEDGIKIPFEAKINQKREGIGYPF).

Belongs to the peptidase A2 family. HERV class-II K(HML-2) subfamily. As to quaternary structure, active as a homodimer. Autoproteolytically processed at the N-terminus. Expected C-terminal autoprocessing not detected. The sequence shown is that of the processed Pro protein.

The catalysed reaction is Processing at the authentic HIV-1 PR recognition site and release of the mature p17 matrix and the p24 capsid protein, as a result of the cleavage of the -SQNY-|-PIVQ- cleavage site.. Its function is as follows. Retroviral proteases have roles in processing of the primary translation products and the maturation of the viral particle. Endogenous Pro proteins may have kept, lost or modified their original function during evolution. This endogenous protein has retained most of the characteristics of retroviral proteases. The chain is Endogenous retrovirus group K member 24 Pro protein (ERVK-24) from Homo sapiens (Human).